The chain runs to 198 residues: Large ribosomal subunit protein bL25 (198 aa).

This sequence belongs to the bacterial ribosomal protein bL25 family. CTC subfamily. As to quaternary structure, part of the 50S ribosomal subunit; part of the 5S rRNA/L5/L18/L25 subcomplex. Contacts the 5S rRNA. Binds to the 5S rRNA independently of L5 and L18.

This is one of the proteins that binds to the 5S RNA in the ribosome where it forms part of the central protuberance. The chain is Large ribosomal subunit protein bL25 from Azotobacter vinelandii (strain DJ / ATCC BAA-1303).